The chain runs to 301 residues: Glycine--tRNA ligase alpha subunit (301 aa).

Belongs to the class-II aminoacyl-tRNA synthetase family. As to quaternary structure, tetramer of two alpha and two beta subunits.

The protein resides in the cytoplasm. The enzyme catalyses tRNA(Gly) + glycine + ATP = glycyl-tRNA(Gly) + AMP + diphosphate. The polypeptide is Glycine--tRNA ligase alpha subunit (Shewanella oneidensis (strain ATCC 700550 / JCM 31522 / CIP 106686 / LMG 19005 / NCIMB 14063 / MR-1)).